The primary structure comprises 412 residues: Serine hydroxymethyltransferase (412 aa).

Residues Leu117 and 121–123 contribute to the (6S)-5,6,7,8-tetrahydrofolate site; that span reads GHL. The residue at position 226 (Lys226) is an N6-(pyridoxal phosphate)lysine. 349-351 contributes to the (6S)-5,6,7,8-tetrahydrofolate binding site; it reads SPF.

The protein belongs to the SHMT family. In terms of assembly, homodimer. Pyridoxal 5'-phosphate serves as cofactor.

It is found in the cytoplasm. The catalysed reaction is (6R)-5,10-methylene-5,6,7,8-tetrahydrofolate + glycine + H2O = (6S)-5,6,7,8-tetrahydrofolate + L-serine. It functions in the pathway one-carbon metabolism; tetrahydrofolate interconversion. It participates in amino-acid biosynthesis; glycine biosynthesis; glycine from L-serine: step 1/1. Its function is as follows. Catalyzes the reversible interconversion of serine and glycine with tetrahydrofolate (THF) serving as the one-carbon carrier. This reaction serves as the major source of one-carbon groups required for the biosynthesis of purines, thymidylate, methionine, and other important biomolecules. Also exhibits THF-independent aldolase activity toward beta-hydroxyamino acids, producing glycine and aldehydes, via a retro-aldol mechanism. The chain is Serine hydroxymethyltransferase from Nitratidesulfovibrio vulgaris (strain DSM 19637 / Miyazaki F) (Desulfovibrio vulgaris).